The sequence spans 1150 residues: Protogenin (1150 aa).

Residues 1 to 35 (MAPPLRPLARLRPPGMLLRALLLLLLLSPLPGVWC) form the signal peptide. Ig-like domains are found at residues 36 to 130 (FSEL…AHLA), 135 to 222 (SAFE…ASLT), 235 to 322 (PTII…ATLT), and 327 to 411 (PSFV…ARLT). Topologically, residues 36–949 (FSELSFVKEP…YYHLDQKSMT (914 aa)) are extracellular. Cystine bridges form between Cys-60–Cys-113, Cys-156–Cys-205, Cys-256–Cys-304, and Cys-348–Cys-395. N-linked (GlcNAc...) asparagine glycosylation is present at Asn-90. Fibronectin type-III domains are found at residues 421 to 515 (APYN…TLED), 517 to 613 (PLRP…TPKA), 618 to 717 (APKS…VRDR), 724 to 817 (PPHH…TLPE), and 822 to 917 (PPVG…VLPK). Asn-488 carries an N-linked (GlcNAc...) asparagine glycan. The N-linked (GlcNAc...) asparagine glycan is linked to Asn-630. The helical transmembrane segment at 950-970 (GIAVGVGIALTCILICVLILI) threads the bilayer. The Cytoplasmic portion of the chain corresponds to 971–1150 (YRSKARKSSA…SVISTTPPNL (180 aa)). Disordered regions lie at residues 981–1002 (SKTA…ASGN) and 1086–1150 (ISDE…PPNL). Composition is skewed to polar residues over residues 983–1000 (TAQN…SLAS) and 1092–1102 (PSSPGQTTSFS). Over residues 1110 to 1138 (DTEHSANSEGSHETGDSGRFSHESNDEIH) the composition is skewed to basic and acidic residues. The span at 1141-1150 (SVISTTPPNL) shows a compositional bias: polar residues.

Belongs to the immunoglobulin superfamily. DCC family.

The protein localises to the membrane. May play a role in anteroposterior axis elongation. In Homo sapiens (Human), this protein is Protogenin.